Reading from the N-terminus, the 99-residue chain is NADH dehydrogenase [ubiquinone] 1 alpha subcomplex subunit 2 (99 aa).

An N-acetylalanine modification is found at alanine 2. A disulfide bridge connects residues cysteine 24 and cysteine 58. The residue at position 64 (lysine 64) is an N6-acetyllysine; alternate. At lysine 64 the chain carries N6-succinyllysine; alternate. Lysine 75 is modified (N6-acetyllysine).

It belongs to the complex I NDUFA2 subunit family. Complex I is composed of 45 different subunits.

The protein resides in the mitochondrion inner membrane. Accessory subunit of the mitochondrial membrane respiratory chain NADH dehydrogenase (Complex I), that is believed not to be involved in catalysis. Complex I functions in the transfer of electrons from NADH to the respiratory chain. The immediate electron acceptor for the enzyme is believed to be ubiquinone. This chain is NADH dehydrogenase [ubiquinone] 1 alpha subcomplex subunit 2 (NDUFA2), found in Bos taurus (Bovine).